Reading from the N-terminus, the 271-residue chain is Ribose-phosphate pyrophosphokinase 2 (271 aa).

Residues 34–36 (DGE) and 82–83 (RQ) contribute to the ATP site. The Mg(2+) site is built by histidine 115 and aspartate 150. Lysine 173 is an active-site residue. D-ribose 5-phosphate-binding positions include arginine 175, aspartate 199, and 203 to 207 (STGGT).

Belongs to the ribose-phosphate pyrophosphokinase family. Class III (archaeal) subfamily. Mg(2+) is required as a cofactor.

The protein localises to the cytoplasm. The catalysed reaction is D-ribose 5-phosphate + ATP = 5-phospho-alpha-D-ribose 1-diphosphate + AMP + H(+). Its pathway is metabolic intermediate biosynthesis; 5-phospho-alpha-D-ribose 1-diphosphate biosynthesis; 5-phospho-alpha-D-ribose 1-diphosphate from D-ribose 5-phosphate (route I): step 1/1. Functionally, involved in the biosynthesis of the central metabolite phospho-alpha-D-ribosyl-1-pyrophosphate (PRPP) via the transfer of pyrophosphoryl group from ATP to 1-hydroxyl of ribose-5-phosphate (Rib-5-P). The protein is Ribose-phosphate pyrophosphokinase 2 of Archaeoglobus fulgidus (strain ATCC 49558 / DSM 4304 / JCM 9628 / NBRC 100126 / VC-16).